A 519-amino-acid polypeptide reads, in one-letter code: Cytochrome P450 709B1 (519 aa).

The helical transmembrane segment at 1–21 threads the bilayer; the sequence is MGLVIFLALIVLILIIGLRIF. Position 464 (Cys464) interacts with heme.

It belongs to the cytochrome P450 family. Heme is required as a cofactor. Highly expressed in siliques.

It is found in the membrane. In terms of biological role, involved in stress response. Does not function as cytokinin hydroxylase in yeast heterologous system. The chain is Cytochrome P450 709B1 from Arabidopsis thaliana (Mouse-ear cress).